We begin with the raw amino-acid sequence, 259 residues long: UPF0246 protein Avin_11220 (259 aa).

It belongs to the UPF0246 family.

This is UPF0246 protein Avin_11220 from Azotobacter vinelandii (strain DJ / ATCC BAA-1303).